Reading from the N-terminus, the 71-residue chain is UPF0346 protein SAK_1533 (71 aa).

This sequence belongs to the UPF0346 family.

This Streptococcus agalactiae serotype Ia (strain ATCC 27591 / A909 / CDC SS700) protein is UPF0346 protein SAK_1533.